Here is a 132-residue protein sequence, read N- to C-terminus: Small ribosomal subunit protein uS8 (132 aa).

The protein belongs to the universal ribosomal protein uS8 family. In terms of assembly, part of the 30S ribosomal subunit. Contacts proteins S5 and S12.

One of the primary rRNA binding proteins, it binds directly to 16S rRNA central domain where it helps coordinate assembly of the platform of the 30S subunit. The sequence is that of Small ribosomal subunit protein uS8 from Chelativorans sp. (strain BNC1).